A 1096-amino-acid chain; its full sequence is Lysine-specific demethylase 4B (1096 aa).

The region spanning 15–57 (IMTFRPTMEEFKDFNKYVAYIESQGAHRAGLAKIIPPKEWKPR) is the JmjN domain. Y133 contributes to the 2-oxoglutarate binding site. The 164-residue stretch at 146–309 (VAQWNIGSLR…YGKVATQCTC (164 aa)) folds into the JmjC domain. H189 and E191 together coordinate Fe cation. 2-oxoglutarate is bound by residues N199 and K207. 2 residues coordinate Zn(2+): C235 and H241. Residue K242 coordinates 2-oxoglutarate. Residue H277 coordinates Fe cation. Positions 307 and 309 each coordinate Zn(2+). Residues 369 to 382 (LLRRSHRKRSQPKK) show a composition bias toward basic residues. Disordered regions lie at residues 369-478 (LLRR…SEEA) and 557-649 (KGPT…VSDP). The segment covering 391–406 (PGEGTAGAALLEEAGG) has biased composition (low complexity). Acidic residues predominate over residues 413–425 (GPEVDPEEEEEEP). Positions 430–443 (HGREAEGAEEDGRG) are enriched in basic and acidic residues. The span at 444–458 (KLRPTKAKSERKKKS) shows a compositional bias: basic residues. Residue S566 is modified to Phosphoserine. K602 carries the N6-acetyllysine modification. Acidic residues predominate over residues 632 to 648 (SSDEEASPFSGEEDVSD). A PHD-type 1 zinc finger spans residues 731 to 789 (MCFTSGGENTEPLPANSYIGDDGTSPLIACGKCCLQVHASCYGIRPELVNEGWTCSRCA). The C2HC pre-PHD-type zinc finger occupies 794–827 (TAECCLCNLRGGALQMTTDRRWIHVICAIAVPEA). The segment at 850–907 (LKCVYCRKRMKKVSGACIQCSYEHCSTSFHVTCAHAAGVLMEPDDWPYVVSITCLKHK) adopts a PHD-type 2 zinc-finger fold. Tudor domains follow at residues 917–974 (RAVS…CVQL) and 975–1031 (GPPS…EELP). Positions 1037 to 1073 (RLSLSTGAPQEPAFSGEEAKAAKRPRVGTPLATEDSG) are disordered. T1065 is modified (phosphothreonine).

It belongs to the JHDM3 histone demethylase family. Fe(2+) is required as a cofactor.

The protein resides in the nucleus. It carries out the reaction N(6),N(6),N(6)-trimethyl-L-lysyl(9)-[histone H3] + 2 2-oxoglutarate + 2 O2 = N(6)-methyl-L-lysyl(9)-[histone H3] + 2 formaldehyde + 2 succinate + 2 CO2. Its function is as follows. Histone demethylase that specifically demethylates 'Lys-9' of histone H3, thereby playing a role in histone code. Does not demethylate histone H3 'Lys-4', H3 'Lys-27', H3 'Lys-36' nor H4 'Lys-20'. Only able to demethylate trimethylated H3 'Lys-9', with a weaker activity than KDM4A, KDM4C and KDM4D. Demethylation of Lys residue generates formaldehyde and succinate. Plays a critical role in the development of the central nervous system (CNS). The protein is Lysine-specific demethylase 4B (KDM4B) of Homo sapiens (Human).